A 533-amino-acid polypeptide reads, in one-letter code: Na(+)/H(+) antiporter NhaB (533 aa).

Helical transmembrane passes span 28-50 (FLII…VLVL), 67-87 (PGGL…SQVL), 96-116 (VLLL…LLLF), 131-165 (VSLM…FYSI), 254-274 (VPVL…GIFG), 316-336 (LIAG…SVII), 364-384 (LAVF…APVI), 396-416 (LVIF…VFVG), 454-474 (ATPN…APLI), and 481-501 (MVWM…MAIQ).

This sequence belongs to the NhaB Na(+)/H(+) (TC 2.A.34) antiporter family.

The protein localises to the cell inner membrane. The catalysed reaction is 2 Na(+)(in) + 3 H(+)(out) = 2 Na(+)(out) + 3 H(+)(in). Its function is as follows. Na(+)/H(+) antiporter that extrudes sodium in exchange for external protons. The protein is Na(+)/H(+) antiporter NhaB of Shewanella baltica (strain OS195).